A 96-amino-acid chain; its full sequence is Aspartyl/glutamyl-tRNA(Asn/Gln) amidotransferase subunit C (96 aa).

The protein belongs to the GatC family. As to quaternary structure, heterotrimer of A, B and C subunits.

It carries out the reaction L-glutamyl-tRNA(Gln) + L-glutamine + ATP + H2O = L-glutaminyl-tRNA(Gln) + L-glutamate + ADP + phosphate + H(+). It catalyses the reaction L-aspartyl-tRNA(Asn) + L-glutamine + ATP + H2O = L-asparaginyl-tRNA(Asn) + L-glutamate + ADP + phosphate + 2 H(+). Functionally, allows the formation of correctly charged Asn-tRNA(Asn) or Gln-tRNA(Gln) through the transamidation of misacylated Asp-tRNA(Asn) or Glu-tRNA(Gln) in organisms which lack either or both of asparaginyl-tRNA or glutaminyl-tRNA synthetases. The reaction takes place in the presence of glutamine and ATP through an activated phospho-Asp-tRNA(Asn) or phospho-Glu-tRNA(Gln). This is Aspartyl/glutamyl-tRNA(Asn/Gln) amidotransferase subunit C from Fusobacterium nucleatum subsp. nucleatum (strain ATCC 25586 / DSM 15643 / BCRC 10681 / CIP 101130 / JCM 8532 / KCTC 2640 / LMG 13131 / VPI 4355).